Consider the following 418-residue polypeptide: Cell division protein FtsA (418 aa).

Belongs to the FtsA/MreB family. Self-interacts. Interacts with FtsZ.

The protein localises to the cell inner membrane. Its function is as follows. Cell division protein that is involved in the assembly of the Z ring. May serve as a membrane anchor for the Z ring. In Buchnera aphidicola subsp. Acyrthosiphon pisum (strain APS) (Acyrthosiphon pisum symbiotic bacterium), this protein is Cell division protein FtsA.